Reading from the N-terminus, the 505-residue chain is 2,3-bisphosphoglycerate-independent phosphoglycerate mutase (505 aa).

The Mn(2+) site is built by Asp-12 and Ser-62. Ser-62 (phosphoserine intermediate) is an active-site residue. Substrate-binding positions include His-123, 153–154, Arg-185, Arg-191, 257–260, and Lys-330; these read RD and RPDR. Residues Asp-397, His-401, Asp-438, His-439, and His-456 each coordinate Mn(2+).

The protein belongs to the BPG-independent phosphoglycerate mutase family. In terms of assembly, monomer. Mn(2+) is required as a cofactor.

It carries out the reaction (2R)-2-phosphoglycerate = (2R)-3-phosphoglycerate. The protein operates within carbohydrate degradation; glycolysis; pyruvate from D-glyceraldehyde 3-phosphate: step 3/5. Functionally, catalyzes the interconversion of 2-phosphoglycerate and 3-phosphoglycerate. The protein is 2,3-bisphosphoglycerate-independent phosphoglycerate mutase of Staphylococcus aureus (strain Mu50 / ATCC 700699).